Here is a 225-residue protein sequence, read N- to C-terminus: MMYHIPGVLSPQDVARFREHLEQAEWVDGRVTTGAQGAQVKNNQQVDTRSALYAALQNEVLNAVNQHALFFAAALPRTLSTPLFNRYQNNETYGFHVDGAVRSHPQNGCMRTDLSATLFLSDPESYDGGELVVNDTFGQHRVKLPAGDLVLYPSSSLHCVTPVTRGVRVASFMWIQSMIRDDKKRAMLFELDNNIQSLKSHYGESEEILSLLNLYHNLLREWSEI.

A Fe2OG dioxygenase domain is found at 78-177 (TLSTPLFNRY…RVASFMWIQS (100 aa)). Fe cation is bound by residues His96, Asp98, and His158. Arg168 is a binding site for 2-oxoglutarate.

Fe(2+) serves as cofactor. L-ascorbate is required as a cofactor.

This chain is PKHD-type hydroxylase YbiX, found in Escherichia coli O6:K15:H31 (strain 536 / UPEC).